The sequence spans 539 residues: Oviduct-specific glycoprotein (539 aa).

A signal peptide spans 1–21 (MGKLLLWVGLLLMLKHHDGAA). In terms of domain architecture, GH18 spans 22-385 (HKLVCYFTNW…HTLNNLLVND (364 aa)). Cys26 and Cys51 are disulfide-bonded. Residues 71 to 72 (PL), 98 to 101 (GGWN), Tyr142, 211 to 214 (LSYD), and Trp355 contribute to the chitin site. N-linked (GlcNAc...) asparagine glycosylation occurs at Asn402. 2 disordered regions span residues 433–480 (TETH…KPLT) and 503–539 (QKVT…LERL). Low complexity predominate over residues 440–457 (ATMTTTPRGETATPTRTP).

This sequence belongs to the glycosyl hydrolase 18 family. Oviduct.

It localises to the cytoplasmic vesicle. Its subcellular location is the secretory vesicle. Functionally, binds to oocyte zona pellucida in vivo. May play a role in the fertilization process and/or early embryonic development. In Ovis aries (Sheep), this protein is Oviduct-specific glycoprotein (OVGP1).